The primary structure comprises 88 residues: Small ribosomal subunit protein bS16 (88 aa).

Belongs to the bacterial ribosomal protein bS16 family.

In Thermus aquaticus, this protein is Small ribosomal subunit protein bS16.